The chain runs to 490 residues: UDP-glycosyltransferase 84A1 (490 aa).

Histidine 30 functions as the Proton acceptor in the catalytic mechanism. Histidine 30 provides a ligand contact to an anthocyanidin. The UDP-alpha-D-glucose site is built by glutamine 358, histidine 373, tryptophan 376, asparagine 377, serine 378, and glutamate 381. Glycine 396 provides a ligand contact to an anthocyanidin. UDP-alpha-D-glucose contacts are provided by aspartate 397 and glutamine 398.

This sequence belongs to the UDP-glycosyltransferase family. In terms of tissue distribution, expressed in roots, flowers and siliques.

It catalyses the reaction (E)-4-coumarate + UDP-alpha-D-glucose = 4-O-(beta-D-glucosyl)-trans-4-coumarate + UDP + H(+). It carries out the reaction (E)-ferulate + UDP-alpha-D-glucose = 1-O-[(E)-feruloyl]-beta-D-glucose + UDP. The enzyme catalyses (E)-caffeate + UDP-alpha-D-glucose = 1-O-[(E)-caffeoyl]-beta-D-glucose + UDP. The catalysed reaction is (E)-sinapate + UDP-alpha-D-glucose = 1-O-(trans-sinapoyl)-beta-D-glucose + UDP. It catalyses the reaction (E)-cinnamate + UDP-alpha-D-glucose = 1-O-(trans-cinnamoyl)-beta-D-glucose + UDP. Functionally, UDP-glucosyltransferase that forms glucose esters with phenylpropanoids. Glucosylates 4-coumarate, ferulate, caffeate, sinapate and cinnamate. Can glucosylate the phytotoxic xenobiotic compound 2,4,5-trichlorophenol (TCP). This chain is UDP-glycosyltransferase 84A1, found in Arabidopsis thaliana (Mouse-ear cress).